A 373-amino-acid chain; its full sequence is UDP-N-acetylglucosamine--N-acetylmuramyl-(pentapeptide) pyrophosphoryl-undecaprenol N-acetylglucosamine transferase (373 aa).

UDP-N-acetyl-alpha-D-glucosamine is bound by residues 13–15 (TGG), Asn124, Arg165, Ser192, and Gln293.

Belongs to the glycosyltransferase 28 family. MurG subfamily.

It localises to the cell inner membrane. The catalysed reaction is di-trans,octa-cis-undecaprenyl diphospho-N-acetyl-alpha-D-muramoyl-L-alanyl-D-glutamyl-meso-2,6-diaminopimeloyl-D-alanyl-D-alanine + UDP-N-acetyl-alpha-D-glucosamine = di-trans,octa-cis-undecaprenyl diphospho-[N-acetyl-alpha-D-glucosaminyl-(1-&gt;4)]-N-acetyl-alpha-D-muramoyl-L-alanyl-D-glutamyl-meso-2,6-diaminopimeloyl-D-alanyl-D-alanine + UDP + H(+). Its pathway is cell wall biogenesis; peptidoglycan biosynthesis. Functionally, cell wall formation. Catalyzes the transfer of a GlcNAc subunit on undecaprenyl-pyrophosphoryl-MurNAc-pentapeptide (lipid intermediate I) to form undecaprenyl-pyrophosphoryl-MurNAc-(pentapeptide)GlcNAc (lipid intermediate II). The sequence is that of UDP-N-acetylglucosamine--N-acetylmuramyl-(pentapeptide) pyrophosphoryl-undecaprenol N-acetylglucosamine transferase from Sinorhizobium fredii (strain NBRC 101917 / NGR234).